Here is a 164-residue protein sequence, read N- to C-terminus: T-cell surface glycoprotein CD3 zeta chain (164 aa).

The signal sequence occupies residues 1 to 21 (MKWKVSVLACILHVRFPGAEA). Gln-22 is subject to Blocked amino end (Gln). The Extracellular segment spans residues 22–30 (QSFGLLDPK). The chain crosses the membrane as a helical span at residues 31–51 (LCYLLDGILFIYGVIITALYL). At 52–164 (RAKFSRSAET…ALHMQTLAPR (113 aa)) the chain is on the cytoplasmic side. Position 58 is a phosphoserine (Ser-58). 3 ITAM domains span residues 61–89 (TAAN…LEKK), 100–128 (QQRR…EIGT), and 131–159 (ERRR…LHMQ). Residues Tyr-72 and Tyr-83 each carry the phosphotyrosine modification. Basic and acidic residues predominate over residues 87–96 (EKKRARDPEM). The disordered stretch occupies residues 87 to 111 (EKKRARDPEMGGKQQRRRNPQEGVY). A phosphotyrosine mark is found at Tyr-111, Tyr-123, Tyr-142, and Tyr-153. The tract at residues 124–143 (SEIGTKGERRRGKGHDGLYQ) is disordered.

The protein belongs to the CD3Z/FCER1G family. As to quaternary structure, the TCR-CD3 complex is composed of a CD3D/CD3E and a CD3G/CD3E heterodimers that preferentially associate with TCRalpha and TCRbeta, respectively, to form TCRalpha/CD3E/CD3G and TCRbeta/CD3G/CD3E trimers. In turn, the hexamer interacts with CD3Z homodimer to form the TCR-CD3 complex. Alternatively, TCRalpha and TCRbeta can be replaced by TCRgamma and TCRdelta. Interacts with SLA. Interacts with SLA2. Interacts with TRAT1. Interacts with DOCK2. Interacts with SHB. Interacts with ZAP70. Interacts (tyrosine phosphorylated) with SHC1 (via SH2 domain). Interacts with PTPRC. Interacts with CRK; this interaction regulates CD3Z phosphorylation. Interacts (on T cell side) with CD81, ICAM1 and CD9 at immunological synapses between antigen-presenting cells and T cells. Interacts with CD160. Interacts with LY6E. Interacts with LY6E. The signaling subunit of immunoglobulin gamma (IgG) Fc receptor complex. As a homodimer or a heterodimer with FCER1G, associates with the ligand binding subunit FCGR3A (via transmembrane domain); this interaction is a prerequisite for Fc receptor complex expression on the cell surface. Interacts with CD5. Phosphorylated on Tyr residues after T-cell receptor triggering by LCK in association with CD4/CD8. As to expression, CD3Z is expressed in normal lymphoid tissue and in peripheral blood mononuclear cells (PBMCs). Expressed also in retinal ganglion cells.

It localises to the cell membrane. Its function is as follows. Part of the TCR-CD3 complex present on T-lymphocyte cell surface that plays an essential role in adaptive immune response. When antigen presenting cells (APCs) activate T-cell receptor (TCR), TCR-mediated signals are transmitted across the cell membrane by the CD3 chains CD3D, CD3E, CD3G and CD3Z. All CD3 chains contain immunoreceptor tyrosine-based activation motifs (ITAMs) in their cytoplasmic domain. Upon TCR engagement, these motifs become phosphorylated by Src family protein tyrosine kinases LCK and FYN, resulting in the activation of downstream signaling pathways. CD3Z ITAMs phosphorylation creates multiple docking sites for the protein kinase ZAP70 leading to ZAP70 phosphorylation and its conversion into a catalytically active enzyme. Plays an important role in intrathymic T-cell differentiation. Additionally, participates in the activity-dependent synapse formation of retinal ganglion cells (RGCs) in both the retina and dorsal lateral geniculate nucleus (dLGN). This Mus musculus (Mouse) protein is T-cell surface glycoprotein CD3 zeta chain (Cd247).